The primary structure comprises 177 residues: uncharacterized protein (177 aa).

An N-acetyltransferase domain is found at 10–177 (LILRQITDQD…NVYSIVKPRE (168 aa)).

It belongs to the acetyltransferase family.

This is an uncharacterized protein from Bacillus subtilis (strain 168).